Consider the following 93-residue polypeptide: Secretoglobin family 3A member 2 (93 aa).

The N-terminal stretch at 1 to 21 is a signal peptide; the sequence is MKLVTIFLLVTISLCSYSATA.

Belongs to the secretoglobin family. UGRP subfamily. As to quaternary structure, homodimer; disulfide-linked. Monomer. Interacts with APOA1. As to expression, highly expressed in lung and trachea. Detected throughout the airway epithelium in lung, with slightly higher expression in large airways. Found in lung submucosal gland acinus where it localizes to serous-like cells. Probably expressed in club cells of the bronchioles. Not detected in other tissues tested.

It localises to the secreted. Functionally, secreted cytokine-like protein. Binds to the scavenger receptor MARCO. Can also bind to pathogens including the Gram-positive bacterium L.monocytogenes, the Gram-negative bacterium P.aeruginosa, and yeast. Strongly inhibits phospholipase A2 (PLA2G1B) activity. Seems to have anti-inflammatory effects in respiratory epithelium. Also has anti-fibrotic activity in lung. May play a role in fetal lung development and maturation. Promotes branching morphogenesis during early stages of lung development. In the pituitary, may inhibit production of follicle-stimulating hormone (FSH) and luteinizing hormone (LH). The polypeptide is Secretoglobin family 3A member 2 (SCGB3A2) (Homo sapiens (Human)).